A 486-amino-acid polypeptide reads, in one-letter code: Glutamyl-tRNA(Gln) amidotransferase subunit A (486 aa).

Catalysis depends on charge relay system residues lysine 77 and serine 152. Serine 176 (acyl-ester intermediate) is an active-site residue.

The protein belongs to the amidase family. GatA subfamily. In terms of assembly, heterotrimer of A, B and C subunits.

It catalyses the reaction L-glutamyl-tRNA(Gln) + L-glutamine + ATP + H2O = L-glutaminyl-tRNA(Gln) + L-glutamate + ADP + phosphate + H(+). Allows the formation of correctly charged Gln-tRNA(Gln) through the transamidation of misacylated Glu-tRNA(Gln) in organisms which lack glutaminyl-tRNA synthetase. The reaction takes place in the presence of glutamine and ATP through an activated gamma-phospho-Glu-tRNA(Gln). The protein is Glutamyl-tRNA(Gln) amidotransferase subunit A of Lactococcus lactis subsp. cremoris (strain SK11).